The following is a 286-amino-acid chain: Aquaporin PIP1-1 (286 aa).

The segment at 1–34 is disordered; that stretch reads MEGKEEDVRLGANKFSERQPIGTAAQSDKGYKEP. Residues 1–54 are Cytoplasmic-facing; it reads MEGKEEDVRLGANKFSERQPIGTAAQSDKGYKEPPPAPLFEPGELTSWSFYRAG. The chain crosses the membrane as a helical span at residues 55–75; the sequence is IAEFMATFLFLYITILTVMGV. The Extracellular segment spans residues 76–88; it reads VKSNSKCSTVGIQ. Residues 89-109 form a helical membrane-spanning segment; it reads GIAWAFGGMIFALVYCTAGIS. At 110 to 131 the chain is on the cytoplasmic side; that stretch reads GGHINPAVTFGLFLARKLSLTR. The NPA 1 signature appears at 114–116; sequence NPA. The chain crosses the membrane as a helical span at residues 132–152; that stretch reads ALFYMVMQCLGAICGAGVVKG. Residues 153 to 174 are Extracellular-facing; that stretch reads YQKGLYESNGGGANVVAPGYTK. Residues 175–195 form a helical membrane-spanning segment; that stretch reads GDGLGAEIVGTFILVYTVFSA. Over 196-208 the chain is Cytoplasmic; sequence TDAKRNARDSHVP. Residues 209–229 traverse the membrane as a helical segment; it reads ILAPLPIGFAVFLVHLATIPI. Residues 230 to 256 lie on the Extracellular side of the membrane; that stretch reads TGTGINPARSLGAAIIYNKKHAWDDHW. The NPA 2 signature appears at 235-237; the sequence is NPA. A helical membrane pass occupies residues 257-277; the sequence is IFWVGPFIGAALAAIYHQIVI. Over 278–286 the chain is Cytoplasmic; that stretch reads RAIPFKSRP.

The protein belongs to the MIP/aquaporin (TC 1.A.8) family. PIP (TC 1.A.8.11) subfamily. In terms of tissue distribution, expressed in leaves, roots, stems, flowers and fruits, with highest levels in roots.

It localises to the cell membrane. Water channel required to facilitate the transport of water across cell membrane; mercury-insensitive. Promotes primary root elongation and root hair formation. Contributes to the tolerance to multiple abiotic stresses including salt (NaCl), cold and water deprivation, by modulating cytosolic K(+)/Na(+) ratio, maintaining osmotic balance, and reducing membrane injury (e.g. oxidative injury). Also regulates the expression of abscisic acid (ABA)-responsive genes during dehydration and salt stresses. In Musa acuminata (Banana), this protein is Aquaporin PIP1-1.